The chain runs to 161 residues: Lincosamide resistance protein (161 aa).

The polypeptide is Lincosamide resistance protein (linA) (Staphylococcus haemolyticus).